Reading from the N-terminus, the 683-residue chain is U4/U6 small nuclear ribonucleoprotein Prp3 (683 aa).

In terms of domain architecture, PWI spans 1–87; the sequence is MALSKRELDE…HSKSSSDRSR (87 aa). A compositionally biased stretch (basic and acidic residues) spans 73 to 107; the sequence is GRSSRHSKSSSDRSRKRDLKEVFGDDSEISKESSG. A disordered region spans residues 73-135; it reads GRSSRHSKSS…IPGPPSESPG (63 aa). Lysine 139 participates in a covalent cross-link: Glycyl lysine isopeptide (Lys-Gly) (interchain with G-Cter in SUMO2). The tract at residues 153–183 is disordered; that stretch reads IEERKKQLSFISPPTPQPKTPSSSQPERLPI. Serine 164 is modified (phosphoserine). Threonine 167 bears the Phosphothreonine mark. Glycyl lysine isopeptide (Lys-Gly) (interchain with G-Cter in SUMO2) cross-links involve residues lysine 244 and lysine 252. The interval 416–550 is mediates interaction with SART3; sequence NLVEHPAQLN…VHISVYRVRN (135 aa). Phosphoserine is present on serine 619.

Component of the precatalytic spliceosome (spliceosome B complex). Component of the U4/U6-U5 tri-snRNP complex, a building block of the precatalytic spliceosome (spliceosome B complex). The U4/U6-U5 tri-snRNP complex is composed of the U4, U6 and U5 snRNAs and at least PRPF3, PRPF4, PRPF6, PRPF8, PRPF31, SNRNP200, TXNL4A, SNRNP40, SNRPB, SNRPD1, SNRPD2, SNRPD3, SNRPE, SNRPF, SNRPG, DDX23, CD2BP2, PPIH, SNU13, EFTUD2, SART1 and USP39, plus LSM2, LSM3, LSM4, LSM5, LSM6, LSM7 and LSM8. Interacts directly with PRPF4. Part of a heteromeric complex containing PPIH, PRPF3 and PRPF4 that is stable in the absence of RNA. Interacts with SART3; the interaction is direct and recruits the deubiquitinase USP4 to PRPF3. Interacts with PRPF19. Interacts ('Lys-63'-linked polyubiquitinated) with PRPF8 (via the MPN (JAB/Mov34) domain); may stabilize the U4/U6-U5 tri-snRNP complex. Interacts with ERCC6. Post-translationally, ubiquitinated. Undergoes 'Lys-63'-linked polyubiquitination by PRPF19 and deubiquitination by USP4. 'Lys-63'-linked ubiquitination increases the affinity for PRPF8 and may regulate the assembly of the U4/U6-U5 tri-snRNP complex.

Its subcellular location is the nucleus. It is found in the nucleus speckle. Its function is as follows. Plays a role in pre-mRNA splicing as component of the U4/U6-U5 tri-snRNP complex that is involved in spliceosome assembly, and as component of the precatalytic spliceosome (spliceosome B complex). The sequence is that of U4/U6 small nuclear ribonucleoprotein Prp3 (PRPF3) from Bos taurus (Bovine).